The following is a 141-amino-acid chain: Protein GAT3 (141 aa).

Residues 72–98 (CPQCAVIKTSPQWREGPDGEVTLCNAC) form a GATA-type zinc finger.

The protein is Protein GAT3 (GAT3) of Saccharomyces cerevisiae (strain ATCC 204508 / S288c) (Baker's yeast).